Reading from the N-terminus, the 84-residue chain is U1-theraphotoxin-Hs1a (84 aa).

The signal sequence occupies residues 1 to 22; the sequence is MKVTLIAILTCAAVLVLHTTAA. Residues 23 to 48 constitute a propeptide that is removed on maturation; it reads EELEESQLMEVGMPDTELAAVDEERL. 3 disulfide bridges follow: Cys51–Cys65, Cys55–Cys76, and Cys70–Cys81.

It belongs to the neurotoxin 12 (Hwtx-2) family. 02 (Hwtx-2) subfamily. As to expression, expressed by the venom gland.

The protein resides in the secreted. Blocks neuromuscular transmission. Acts cooperatively to potentiate the activity of huwentoxin-I. Paralyzes locusts and kills mice following intracerebroventricular injection. This Cyriopagopus schmidti (Chinese bird spider) protein is U1-theraphotoxin-Hs1a.